An 86-amino-acid chain; its full sequence is Small ribosomal subunit protein uS17 (86 aa).

Belongs to the universal ribosomal protein uS17 family. As to quaternary structure, part of the 30S ribosomal subunit.

Its function is as follows. One of the primary rRNA binding proteins, it binds specifically to the 5'-end of 16S ribosomal RNA. The protein is Small ribosomal subunit protein uS17 of Halalkalibacterium halodurans (strain ATCC BAA-125 / DSM 18197 / FERM 7344 / JCM 9153 / C-125) (Bacillus halodurans).